The following is a 557-amino-acid chain: ETHYLENE INSENSITIVE 3-like 5 protein (557 aa).

Disordered stretches follow at residues 1 to 23 and 61 to 96; these read MVEV…DLEE and NLNS…RKKM. Over residues 64–82 the composition is skewed to low complexity; sequence SVISSPSSSTSASSSSSSS. Positions 270–311 form a coiled coil; the sequence is ERVRRLARQSKCLQDKMMAKETDTWSRVLNQEEARLNRLKIS.

Belongs to the EIN3 family.

The protein resides in the nucleus. In terms of biological role, putative transcription factor that may be involved in the ethylene response pathway. The polypeptide is ETHYLENE INSENSITIVE 3-like 5 protein (EIL5) (Arabidopsis thaliana (Mouse-ear cress)).